A 671-amino-acid polypeptide reads, in one-letter code: MEPIEQQLTELRTTLRHHEYLYHVMDAPEIPDAEYDRLMRELRELEAQRPDLITPDSPTQRVGAAPLTAFNQIRHEVPMLSLDNVFDEESFLAFNKRVQDRLKSTENVIWCCELKLDGLAVSILYENGVLVSAATRGDGTTGEDITSNVRTIRAIPLKLHGDNIPARLEVRGEVFLPQAGFEKINEDARRTGGKVFANPRNAAAGSLRQLDPRITAKRPLTFFCYGVGILEGGELPDTHLGRLLQFKAWGLPVSDRVTLCDSPQAVLDFYHNVEKDRPTLGFDIDGVVIKVNSLALQEQLGFVARAPRWAVAFKFPAQEQMTFVRDVEFQVGRTGAITPVARLEPVQVAGVLVSNATLHNADEIERLGLRIGDKVVIRRAGDVIPQVVNVVLSERPEETRPIVFPTHCPVCGSDVERVEGEAVTRCTGGLICGAQRKESLKHFVSRRAMDVDGMGDKIIDQLVEREYVHTPADLFRLTAGKLTGLDRMGPKSAQNVVNALEKAKATTFARFLYALGIREVGEATAAGLAAYFGTLEALQAATIDELQKVPDVGIVVATHVFNFFAEESNRDVIVQLLAEGVHWPAPVVINVQEIDSPFAGKTVVLTGSLSQMSRDDAKARLVALGAKVAGSVSKKTDLVIAGEAAGSKLAKAQELGINVIDEAEMIRLLGA.

Residues 32–36, 81–82, and Glu-113 each bind NAD(+); these read DAEYD and SL. Lys-115 acts as the N6-AMP-lysine intermediate in catalysis. Positions 136, 173, 290, and 314 each coordinate NAD(+). Zn(2+) contacts are provided by Cys-408, Cys-411, Cys-426, and Cys-432. The BRCT domain occupies 593–671; that stretch reads EIDSPFAGKT…EAEMIRLLGA (79 aa).

It belongs to the NAD-dependent DNA ligase family. LigA subfamily. The cofactor is Mg(2+). Mn(2+) serves as cofactor.

The enzyme catalyses NAD(+) + (deoxyribonucleotide)n-3'-hydroxyl + 5'-phospho-(deoxyribonucleotide)m = (deoxyribonucleotide)n+m + AMP + beta-nicotinamide D-nucleotide.. DNA ligase that catalyzes the formation of phosphodiester linkages between 5'-phosphoryl and 3'-hydroxyl groups in double-stranded DNA using NAD as a coenzyme and as the energy source for the reaction. It is essential for DNA replication and repair of damaged DNA. The sequence is that of DNA ligase from Salmonella paratyphi A (strain ATCC 9150 / SARB42).